The chain runs to 370 residues: Queuine tRNA-ribosyltransferase (370 aa).

The active-site Proton acceptor is Asp92. Substrate contacts are provided by residues 92–96, Asp146, Gln190, and Gly217; that span reads DSGGF. The segment at 248–254 is RNA binding; sequence GVGTPEN. The Nucleophile role is filled by Asp267. Residues Cys305, Cys307, Cys310, and His336 each coordinate Zn(2+).

It belongs to the queuine tRNA-ribosyltransferase family. In terms of assembly, homodimer. Within each dimer, one monomer is responsible for RNA recognition and catalysis, while the other monomer binds to the replacement base PreQ1. The cofactor is Zn(2+).

It catalyses the reaction 7-aminomethyl-7-carbaguanine + guanosine(34) in tRNA = 7-aminomethyl-7-carbaguanosine(34) in tRNA + guanine. It functions in the pathway tRNA modification; tRNA-queuosine biosynthesis. Catalyzes the base-exchange of a guanine (G) residue with the queuine precursor 7-aminomethyl-7-deazaguanine (PreQ1) at position 34 (anticodon wobble position) in tRNAs with GU(N) anticodons (tRNA-Asp, -Asn, -His and -Tyr). Catalysis occurs through a double-displacement mechanism. The nucleophile active site attacks the C1' of nucleotide 34 to detach the guanine base from the RNA, forming a covalent enzyme-RNA intermediate. The proton acceptor active site deprotonates the incoming PreQ1, allowing a nucleophilic attack on the C1' of the ribose to form the product. After dissociation, two additional enzymatic reactions on the tRNA convert PreQ1 to queuine (Q), resulting in the hypermodified nucleoside queuosine (7-(((4,5-cis-dihydroxy-2-cyclopenten-1-yl)amino)methyl)-7-deazaguanosine). In Desulforapulum autotrophicum (strain ATCC 43914 / DSM 3382 / VKM B-1955 / HRM2) (Desulfobacterium autotrophicum), this protein is Queuine tRNA-ribosyltransferase.